A 71-amino-acid polypeptide reads, in one-letter code: Bowman-Birk type trypsin inhibitor (71 aa).

6 disulfide bridges follow: C10–C67, C11–C27, C14–C63, C17–C25, C35–C42, and C39–C55.

It belongs to the Bowman-Birk serine protease inhibitor family.

Inhibits trypsin but not chymotrypsin. The protein is Bowman-Birk type trypsin inhibitor of Triticum aestivum (Wheat).